We begin with the raw amino-acid sequence, 214 residues long: Glycoprotein Q2 (214 aa).

Positions 1–19 are cleaved as a signal peptide; the sequence is MHFLVVYILIHFHAYRGMA. N-linked (GlcNAc...) asparagine; by host glycosylation is found at N41, N74, N110, and N210.

Interacts with isoform gQ1. The heterodimer gQ1-gQ2 associates with the glycoprotein complex gH-gL to form a tetrameric complex. The gH/gL/gQ1/gQ2 complex binds to human receptor CD46. Post-translationally, glycosylated by host.

Its subcellular location is the virion membrane. The protein resides in the host endoplasmic reticulum-Golgi intermediate compartment. Functionally, plays a role in virus entry by participating in host receptor binding at the cell surface. The polypeptide is Glycoprotein Q2 (Human herpesvirus 6A (strain Uganda-1102) (HHV-6 variant A)).